The primary structure comprises 99 residues: Acylphosphatase-2 (99 aa).

Position 2 is an N-acetylserine (Ser2). One can recognise an Acylphosphatase-like domain in the interval 9 to 99; it reads SVDYEVFGRV…LEYSNFSIRY (91 aa). Active-site residues include Arg24 and Asn42. Ser93 carries the post-translational modification Phosphoserine.

Belongs to the acylphosphatase family.

It carries out the reaction an acyl phosphate + H2O = a carboxylate + phosphate + H(+). In terms of biological role, its physiological role is not yet clear. This chain is Acylphosphatase-2 (ACYP2), found in Cavia porcellus (Guinea pig).